A 316-amino-acid chain; its full sequence is Acetyl-coenzyme A carboxylase carboxyl transferase subunit beta (316 aa).

The CoA carboxyltransferase N-terminal domain maps to 39–308 (LWHKCSKCGV…TPPMVLWETM (270 aa)). Zn(2+) is bound by residues Cys43, Cys46, Cys62, and Cys65. The segment at 43–65 (CSKCGVLTYTKDLRANQMVCVEC) adopts a C4-type zinc-finger fold.

This sequence belongs to the AccD/PCCB family. Acetyl-CoA carboxylase is a heterohexamer composed of biotin carboxyl carrier protein (AccB), biotin carboxylase (AccC) and two subunits each of ACCase subunit alpha (AccA) and ACCase subunit beta (AccD). The cofactor is Zn(2+).

It is found in the cytoplasm. The enzyme catalyses N(6)-carboxybiotinyl-L-lysyl-[protein] + acetyl-CoA = N(6)-biotinyl-L-lysyl-[protein] + malonyl-CoA. It participates in lipid metabolism; malonyl-CoA biosynthesis; malonyl-CoA from acetyl-CoA: step 1/1. Functionally, component of the acetyl coenzyme A carboxylase (ACC) complex. Biotin carboxylase (BC) catalyzes the carboxylation of biotin on its carrier protein (BCCP) and then the CO(2) group is transferred by the transcarboxylase to acetyl-CoA to form malonyl-CoA. In Nostoc sp. (strain PCC 7120 / SAG 25.82 / UTEX 2576), this protein is Acetyl-coenzyme A carboxylase carboxyl transferase subunit beta.